The primary structure comprises 148 residues: Snaclec 7 (148 aa).

Positions 1–23 (MGRFIFVSFGLLVVFLSLSGTGA) are cleaved as a signal peptide. Cystine bridges form between Cys-27–Cys-38, Cys-55–Cys-144, and Cys-121–Cys-136. Positions 34-145 (HERHCYKVIN…CSSTHPFVCK (112 aa)) constitute a C-type lectin domain.

It belongs to the snaclec family. In terms of assembly, heterodimer; disulfide-linked. In terms of tissue distribution, expressed by the venom gland.

It is found in the secreted. Functionally, interferes with one step of hemostasis (modulation of platelet aggregation, or coagulation cascade, for example). The chain is Snaclec 7 from Echis pyramidum leakeyi (Leakey's carpet viper).